Here is a 115-residue protein sequence, read N- to C-terminus: Large ribosomal subunit protein bL19 (115 aa).

Belongs to the bacterial ribosomal protein bL19 family.

Its function is as follows. This protein is located at the 30S-50S ribosomal subunit interface and may play a role in the structure and function of the aminoacyl-tRNA binding site. The protein is Large ribosomal subunit protein bL19 of Desulfovibrio desulfuricans (strain ATCC 27774 / DSM 6949 / MB).